Here is an 816-residue protein sequence, read N- to C-terminus: Phosphatidylinositol 4-kinase beta (816 aa).

The interval 1–30 is disordered; that stretch reads MGDTVVEPTPLKPTSESTPGPAGSNGGSLL. Residue glycine 2 is modified to N-acetylglycine. Positions 2–68 are interaction with ACBD3; that stretch reads GDTVVEPTPL…VKLLHGGVAI (67 aa). The PIK helical domain occupies 52–242; the sequence is CQEVLEKVKL…GTKLRKLILS (191 aa). Positions 248–318 are disordered; the sequence is AHRKRELPSL…TESIDNSFSS (71 aa). Position 258 is a phosphoserine (serine 258). Threonine 263 carries the phosphothreonine modification. 5 positions are modified to phosphoserine: serine 266, serine 275, serine 277, serine 284, and serine 294. 2 stretches are compositionally biased toward polar residues: residues 278 to 297 and 306 to 318; these read DATASISLSSNLKRTASNPK and SSSTESIDNSFSS. Serine 428 bears the Phosphoserine mark. Threonine 438 is modified (phosphothreonine). A Phosphoserine modification is found at serine 511. Residues threonine 517 and threonine 519 each carry the phosphothreonine modification. The region spanning 535–801 is the PI3K/PI4K catalytic domain; sequence EPWQEKVRRI…MVDGSMRSIT (267 aa). Positions 541 to 547 are G-loop; that stretch reads VRRIREG. The segment at 668 to 676 is catalytic loop; that stretch reads QVKDRHNGN. Residues 687–711 form an activation loop region; the sequence is HIDFGFILSSSPRNLGFETSAFKLT.

The protein belongs to the PI3/PI4-kinase family. Type III PI4K subfamily. Interacts with ARF1 and ARF3 in the Golgi complex, but not with ARF4, ARF5 or ARF6. Interacts with NCS1/FREQ in a calcium-independent manner. Interacts with CALN1/CABP8 and CALN2/CABP7; in a calcium-dependent manner; this interaction competes with NCS1/FREQ binding. Interacts with ACBD3. Interacts with ARMH3, YWHAB, YWHAE, YWHAG, YWHAH, YWHAQ, YWHAZ and SFN. Interacts with GGA2 (via VHS domain); the interaction is important for PI4KB location at the Golgi apparatus membrane. Interacts with ATG9A. Requires Mg(2+) as cofactor. The cofactor is Mn(2+).

It localises to the endomembrane system. The protein localises to the mitochondrion outer membrane. It is found in the rough endoplasmic reticulum membrane. Its subcellular location is the golgi apparatus. The protein resides in the golgi apparatus membrane. The enzyme catalyses a 1,2-diacyl-sn-glycero-3-phospho-(1D-myo-inositol) + ATP = a 1,2-diacyl-sn-glycero-3-phospho-(1D-myo-inositol 4-phosphate) + ADP + H(+). Inhibited by wortmannin. Increased kinase activity upon interaction with NCS1/FREQ. Phosphorylates phosphatidylinositol (PI) in the first committed step in the production of the second messenger inositol-1,4,5,-trisphosphate (PIP). May regulate Golgi disintegration/reorganization during mitosis, possibly via its phosphorylation. Involved in Golgi-to-plasma membrane trafficking. May play an important role in the inner ear development. The chain is Phosphatidylinositol 4-kinase beta (PI4KB) from Otolemur garnettii (Small-eared galago).